Consider the following 330-residue polypeptide: Tryptophan--tRNA ligase (330 aa).

Residues 10-12 and 18-19 contribute to the ATP site; these read QTT and GN. A 'HIGH' region motif is present at residues 11–19; that stretch reads TTGALHLGN. L-tryptophan is bound at residue Asp134. ATP contacts are provided by residues 146–148, Ile186, and 195–199; these read GED and KMSKS. A 'KMSKS' region motif is present at residues 195–199; sequence KMSKS.

This sequence belongs to the class-I aminoacyl-tRNA synthetase family. Homodimer.

The protein resides in the cytoplasm. It carries out the reaction tRNA(Trp) + L-tryptophan + ATP = L-tryptophyl-tRNA(Trp) + AMP + diphosphate + H(+). Catalyzes the attachment of tryptophan to tRNA(Trp). In Rickettsia prowazekii (strain Madrid E), this protein is Tryptophan--tRNA ligase.